The sequence spans 1462 residues: Iron-sulfur cluster assembly protein SufD (1462 aa).

Disordered stretches follow at residues 500–525, 938–970, and 1111–1153; these read IDNN…DNPY, NQNK…GTEQ, and NIPS…EKEE. A compositionally biased stretch (low complexity) spans 510 to 523; it reads NNNNNNNNNNNCDN. The span at 961–970 shows a compositional bias: basic and acidic residues; the sequence is HIQDEQGTEQ. The segment covering 1111-1136 has biased composition (low complexity); sequence NIPSNNKQTNSNNNSEYNNEQNNCSN.

The protein belongs to the iron-sulfur cluster assembly SufBD family. In terms of assembly, component of a complex composed of SufB, SufC and SufD in a stoichiometric ratio of 1:2:1. Interacts with SufB. Interacts with SufC; the interaction enhances the ATPase activity of SufC. Proteolytically cleaved.

It is found in the plastid. Its subcellular location is the apicoplast. The protein operates within cofactor biosynthesis; iron-sulfur cluster biosynthesis. Participates in the sulfur mobilization (SUF) pathway for iron-sulfur (Fe-S) cluster biogenesis. As part of a complex consisting of SufB-SufC(2)-SufD, involved in assembly of [4Fe-4S] clusters. Enhances the ATPase activity of SufC. This chain is Iron-sulfur cluster assembly protein SufD, found in Plasmodium falciparum (isolate 3D7).